The sequence spans 286 residues: Protein Bride of doubletime (286 aa).

Interacts with dco (via nuclear localization signal). Interacts with Ankrd49; interaction promotes the stability of both complex members.

It is found in the cytoplasm. Its subcellular location is the cytosol. The protein resides in the cell membrane. Functions in planar polarity establishment and circadian rhythms by promoting the activity and localization of dco/dbt. Required for regulating the levels of dco/dbt and per in the nuclei of photoreceptor cells and thereby is involved in normal oscillations of the circadian clock proteins in the eye. In the dark, the cry circadian and rhodopsin visual pathways, activate the accumulation of the protein into Arr1- and Arr2-dependent cytosolic foci which are required for dco localization to photoreceptor nuclei. It is possible that the accumulation into foci results in the dissociation of the protein from dco, thus allowing dco to interact with importins and microtubles for nuclear transport. By promoting nuclei localization and kinase activity of dco towards per, it is essential for regulating normal cycles of per nuclear accumulation in brain circadian neurons and thus is important for normal circadian behavior. Essential for regulating the establishment of planar cell polarity in the wing. Forms a complex with Ankrd49 which likely functions in the regulation of planar polarity by promoting the activity of dco during planar polarity establishment. Within the complex, directly promotes dco activity in regulating phosphorylation and asymmetric localization of core planar polarity proteins such as dsh. This Drosophila melanogaster (Fruit fly) protein is Protein Bride of doubletime.